Here is a 400-residue protein sequence, read N- to C-terminus: Elongation factor Tu-B (400 aa).

The region spanning 10-209 (KPHVNVGTIG…VVDEYIPTPE (200 aa)) is the tr-type G domain. Residues 19-26 (GHVDHGKT) form a G1 region. Position 19-26 (19-26 (GHVDHGKT)) interacts with GTP. Residue Thr-26 coordinates Mg(2+). The segment at 60–64 (GITIN) is G2. The segment at 81 to 84 (DCPG) is G3. Residues 81 to 85 (DCPGH) and 136 to 139 (NKAD) each bind GTP. Positions 136–139 (NKAD) are G4. The interval 174-176 (SAL) is G5.

Belongs to the TRAFAC class translation factor GTPase superfamily. Classic translation factor GTPase family. EF-Tu/EF-1A subfamily. Monomer.

It localises to the cytoplasm. The catalysed reaction is GTP + H2O = GDP + phosphate + H(+). In terms of biological role, GTP hydrolase that promotes the GTP-dependent binding of aminoacyl-tRNA to the A-site of ribosomes during protein biosynthesis. This chain is Elongation factor Tu-B, found in Caldanaerobacter subterraneus subsp. tengcongensis (strain DSM 15242 / JCM 11007 / NBRC 100824 / MB4) (Thermoanaerobacter tengcongensis).